Consider the following 466-residue polypeptide: Soluble pyridine nucleotide transhydrogenase (466 aa).

36–45 is an FAD binding site; that stretch reads ERYHNVGGGC.

Belongs to the class-I pyridine nucleotide-disulfide oxidoreductase family. FAD is required as a cofactor.

The protein localises to the cytoplasm. The enzyme catalyses NAD(+) + NADPH = NADH + NADP(+). In terms of biological role, conversion of NADPH, generated by peripheral catabolic pathways, to NADH, which can enter the respiratory chain for energy generation. The sequence is that of Soluble pyridine nucleotide transhydrogenase from Salmonella paratyphi A (strain ATCC 9150 / SARB42).